The chain runs to 135 residues: ATP synthase epsilon chain (135 aa).

It belongs to the ATPase epsilon chain family. F-type ATPases have 2 components, CF(1) - the catalytic core - and CF(0) - the membrane proton channel. CF(1) has five subunits: alpha(3), beta(3), gamma(1), delta(1), epsilon(1). CF(0) has three main subunits: a, b and c.

The protein resides in the cell inner membrane. Its function is as follows. Produces ATP from ADP in the presence of a proton gradient across the membrane. In Hyphomonas neptunium (strain ATCC 15444), this protein is ATP synthase epsilon chain.